Here is a 1391-residue protein sequence, read N- to C-terminus: DNA-directed RNA polymerase subunit beta'' (1391 aa).

Zn(2+) contacts are provided by C220, C291, C298, and C301.

Belongs to the RNA polymerase beta' chain family. RpoC2 subfamily. As to quaternary structure, in plastids the minimal PEP RNA polymerase catalytic core is composed of four subunits: alpha, beta, beta', and beta''. When a (nuclear-encoded) sigma factor is associated with the core the holoenzyme is formed, which can initiate transcription. Zn(2+) serves as cofactor.

The protein localises to the plastid. The protein resides in the chloroplast. The catalysed reaction is RNA(n) + a ribonucleoside 5'-triphosphate = RNA(n+1) + diphosphate. Its function is as follows. DNA-dependent RNA polymerase catalyzes the transcription of DNA into RNA using the four ribonucleoside triphosphates as substrates. This Gossypium barbadense (Sea Island cotton) protein is DNA-directed RNA polymerase subunit beta''.